Reading from the N-terminus, the 207-residue chain is Large ribosomal subunit protein uL4 (207 aa).

Residues 62–85 (KKPFKQKGTGQARQGCRRAPQYPG) form a disordered region.

It belongs to the universal ribosomal protein uL4 family. Part of the 50S ribosomal subunit.

Functionally, one of the primary rRNA binding proteins, this protein initially binds near the 5'-end of the 23S rRNA. It is important during the early stages of 50S assembly. It makes multiple contacts with different domains of the 23S rRNA in the assembled 50S subunit and ribosome. In terms of biological role, forms part of the polypeptide exit tunnel. The chain is Large ribosomal subunit protein uL4 from Geobacter sp. (strain M21).